Consider the following 835-residue polypeptide: Replication origin-binding protein (835 aa).

The Helicase ATP-binding domain occupies 54-215 (PGMSQTRPVT…SGLRGDENIH (162 aa)). 67–74 (APMGSGKT) is a binding site for ATP.

This sequence belongs to the herpesviridae OriBP family. Homodimer. Interacts with the major DNA-binding protein. Interacts with the helicase/primase component 52 and the polymerase accessory protein.

It localises to the host nucleus. Functions as a docking protein to recruit essential components of the viral replication machinery to viral DNA origins. In the presence of the major DNA-binding protein, opens dsDNA leading to a conformational change in the origin that facilitates DNA unwinding and subsequent replication. The polypeptide is Replication origin-binding protein (Varicella-zoster virus (strain Oka vaccine) (HHV-3)).